A 282-amino-acid chain; its full sequence is MVLIRVLASLLILQLSYSKSLDDGAKESAYDDEIQQSSWGNSTVNTTLTETVVIQLIMGGSECYKSKHPFLVYLYNSAGFFCSGTLLNHEWVLTAAHCNRDDIQLKLGVHNVHVHYEDEQIRVPKEKLCCLSTKNCTQWSQDIMLIRLNSSVNNSKHIEPLSLPSRPPSMGSDCTVMGWGTITSPKVTYPKVPHCVDIKILHNPVCQAAYPTMSRKNILCAGVLEGGKDSCKGDSGGPLICDGQIQGIVSWGRFPCAQLLEPGVYTKVFDYIDWIRGIIAGN.

A signal peptide spans 1–18; that stretch reads MVLIRVLASLLILQLSYS. Positions 19–56 are excised as a propeptide; it reads KSLDDGAKESAYDDEIQQSSWGNSTVNTTLTETVVIQL. N-linked (GlcNAc...) asparagine glycosylation is found at Asn41 and Asn45. In terms of domain architecture, Peptidase S1 spans 57–280; that stretch reads IMGGSECYKS…YIDWIRGIIA (224 aa). 5 disulfide bridges follow: Cys63-Cys195, Cys82-Cys98, Cys174-Cys241, Cys206-Cys220, and Cys231-Cys256. The active-site Charge relay system is His97. N-linked (GlcNAc...) asparagine glycosylation occurs at Asn135. Asp142 (charge relay system) is an active-site residue. N-linked (GlcNAc...) asparagine glycosylation is found at Asn149 and Asn153. Ser235 serves as the catalytic Charge relay system.

Belongs to the peptidase S1 family. Snake venom subfamily. Monomer. In terms of tissue distribution, expressed by the venom gland.

The protein resides in the secreted. In terms of biological role, snake venom serine protease that may act in the hemostasis system of the prey. This Naja atra (Chinese cobra) protein is Snake venom serine protease NaSP.